Reading from the N-terminus, the 437-residue chain is Argininosuccinate lyase (437 aa).

The protein belongs to the lyase 1 family. Argininosuccinate lyase subfamily.

The protein resides in the cytoplasm. It catalyses the reaction 2-(N(omega)-L-arginino)succinate = fumarate + L-arginine. It functions in the pathway amino-acid biosynthesis; L-arginine biosynthesis; L-arginine from L-ornithine and carbamoyl phosphate: step 3/3. This chain is Argininosuccinate lyase, found in Clostridium acetobutylicum (strain ATCC 824 / DSM 792 / JCM 1419 / IAM 19013 / LMG 5710 / NBRC 13948 / NRRL B-527 / VKM B-1787 / 2291 / W).